Consider the following 558-residue polypeptide: Energy-dependent translational throttle protein EttA (558 aa).

2 consecutive ABC transporter domains span residues 6 to 256 (YTMK…AVQG) and 322 to 552 (VEVD…RVTH). 38–45 (GPNGAGKS) contacts ATP. The arm stretch occupies residues 94-136 (GDIKIKLDRFNEVAELMATDYTDELMEEMGRLQEELDHADAWD). Residues 239–320 (GNYSTYLEKK…IPVGPRLGNV (82 aa)) form a ptIM region. 354–361 (GPNGVGKT) is a binding site for ATP.

The protein belongs to the ABC transporter superfamily. ABCF family. Translational throttle EttA subfamily. Monomer. Probably contacts ribosomal proteins L1, L5, L33 and S7, the 16S and 23S rRNA and the P-site containing tRNA(fMet).

The protein resides in the cytoplasm. It carries out the reaction ATP + H2O = ADP + phosphate + H(+). Its function is as follows. A translation factor that gates the progression of the 70S ribosomal initiation complex (IC, containing tRNA(fMet) in the P-site) into the translation elongation cycle by using a mechanism sensitive to the ATP/ADP ratio. Binds to the 70S ribosome E-site where it modulates the state of the translating ribosome during subunit translocation. ATP hydrolysis probably frees it from the ribosome, which can enter the elongation phase. This chain is Energy-dependent translational throttle protein EttA, found in Mycobacterium tuberculosis (strain CDC 1551 / Oshkosh).